A 337-amino-acid chain; its full sequence is Protein XAP5 CIRCADIAN TIMEKEEPER (337 aa).

Serine 2 carries the N-acetylserine modification. Coiled coils occupy residues 13 to 41 and 72 to 121; these read QDAV…KSAS and TREE…GSSR. The segment covering 23 to 37 has biased composition (basic and acidic residues); the sequence is KQREAERKKIQELKS. Residues 23–47 form a disordered region; the sequence is KQREAERKKIQELKSKSASGNDQSG. Over residues 38 to 47 the composition is skewed to polar residues; it reads KSASGNDQSG. The tract at residues 125–174 is disordered; sequence AEDFENGSDEDDGENKSSGTGNLRCGKLGKDPSVETNFLPDSEREAEEQA. Acidic residues predominate over residues 126-137; that stretch reads EDFENGSDEDDG. Serine 132 is modified (phosphoserine). Residues 165-174 show a composition bias toward basic and acidic residues; the sequence is DSEREAEEQA.

It belongs to the FAM50 family. In terms of tissue distribution, expressed in leaves stems, flowers, roots, trichomes and hypocotyls.

The protein localises to the nucleus. Its function is as follows. Involved in light regulation of the circadian clock and photomorphogenesis. May play a global role in coordinating growth in response to the light environment. Acts as a light quality sensor directing both negative and positive transcriptional regulation. Inhibits growth in red light but promote growth in blue light. Inhibits clock gene expression in diurnal cycles. Plays no role in the control of flowering time. The chain is Protein XAP5 CIRCADIAN TIMEKEEPER (XCT) from Arabidopsis thaliana (Mouse-ear cress).